We begin with the raw amino-acid sequence, 355 residues long: Protein RecA (355 aa).

72–79 (GPESSGKT) lines the ATP pocket.

Belongs to the RecA family.

The protein resides in the cytoplasm. Can catalyze the hydrolysis of ATP in the presence of single-stranded DNA, the ATP-dependent uptake of single-stranded DNA by duplex DNA, and the ATP-dependent hybridization of homologous single-stranded DNAs. It interacts with LexA causing its activation and leading to its autocatalytic cleavage. The protein is Protein RecA of Wolbachia sp. subsp. Drosophila simulans (strain wRi).